Consider the following 1274-residue polypeptide: Polycomb protein Sfmbt (1274 aa).

Positions 266–285 (PSSKQMKGYRNSNSSGTSSA) are disordered. The span at 267–278 (SSKQMKGYRNSN) shows a compositional bias: polar residues. Residues 331–366 (PIQKDGMAVCERCGAIGVKHTFYTKSRRFCSMACAR) form an FCS-type zinc finger. 4 residues coordinate Zn(2+): cysteine 340, cysteine 343, cysteine 360, and cysteine 364. A compositionally biased stretch (low complexity) spans 381–394 (TGATTSNNQSTSSS). 2 disordered regions span residues 381-401 (TGATTSNNQSTSSSPLPAASG) and 488-510 (PGGEANGSGNDTSTPNTASSGYL). Over residues 494–509 (GSGNDTSTPNTASSGY) the composition is skewed to polar residues. 4 MBT repeats span residues 564–675 (YDWL…LIPP), 683–781 (KDWK…LAAP), 789–899 (LAGR…VTPP), and 907–1003 (FTWE…LEGP). Disordered stretches follow at residues 1007 to 1063 (SYQQ…TTPH) and 1083 to 1167 (YENN…NSSA). The segment covering 1019-1028 (KVPRKKKTKK) has biased composition (basic residues). The span at 1038-1050 (AKQQNDNTQTTQT) shows a compositional bias: low complexity. Residues 1087–1114 (QPEDGDGDEEDPDPDADADLDADADGDG) are compositionally biased toward acidic residues. 2 stretches are compositionally biased toward polar residues: residues 1117–1128 (STSHISEQSTTH) and 1158–1167 (GNSNKMNSSA). Residues 1194–1258 (WNVYDVSQFL…DLITQLKCKV (65 aa)) enclose the SAM domain.

As to quaternary structure, interacts with pho as a component of the pho-repressive complex (PhoRC).

The protein localises to the nucleus. Polycomb group (PcG) protein that binds to the Polycomb response elements (PREs) found in the regulatory regions of many genes. PcG proteins act by forming multiprotein complexes, which are required to maintain the transcriptionally repressive state of homeotic genes throughout development. PcG proteins are not required to initiate repression, but to maintain it during later stages of development. They probably act via the methylation of histones, rendering chromatin heritably changed in its expressibility. Necessary but not sufficient to recruit a functional PcG repressive complex that represses target genes, suggesting that the recruitment of the distinct PRC1 complex is also required to allow a subsequent repression. In Drosophila pseudoobscura pseudoobscura (Fruit fly), this protein is Polycomb protein Sfmbt.